The following is a 121-amino-acid chain: Small ribosomal subunit protein bS6 (121 aa).

The disordered stretch occupies residues 99 to 121 (PSLMMRNVEREEARKTQQQEFAA). Over residues 105-115 (NVEREEARKTQ) the composition is skewed to basic and acidic residues.

It belongs to the bacterial ribosomal protein bS6 family.

In terms of biological role, binds together with bS18 to 16S ribosomal RNA. The polypeptide is Small ribosomal subunit protein bS6 (Polaromonas naphthalenivorans (strain CJ2)).